The primary structure comprises 198 residues: MICOS complex subunit MIC26 (198 aa).

A signal peptide spans Met-1–Pro-25. The helical transmembrane segment at Pro-108–Ala-128 threads the bilayer. Ser-162 carries O-linked (Xyl...) (chondroitin sulfate) serine glycosylation.

It belongs to the apolipoprotein O/MICOS complex subunit Mic27 family. Component of the mitochondrial contact site and cristae organizing system (MICOS) complex, composed of at least MICOS10/MIC10, CHCHD3/MIC19, CHCHD6/MIC25, APOOL/MIC27, IMMT/MIC60, APOO/MIC23/MIC26 and MICOS13/MIC13. This complex was also known under the names MINOS or MitOS complex. he MICOS complex associates with mitochondrial outer membrane proteins SAMM50, MTX1 and MTX2 (together described as components of the mitochondrial outer membrane sorting assembly machinery (SAM) complex) and DNAJC11, mitochondrial inner membrane protein TMEM11 and with HSPA9. The MICOS and SAM complexes together with DNAJC11 are part of a large protein complex spanning both membranes termed the mitochondrial intermembrane space bridging (MIB) complex. Interacts with IMMT/MIC60. Interacts with MICOS10/MIC10 and APOOL/MIC27. O-glycosylation; glycosaminoglycan of chondroitin-sulfate type. As to expression, expressed in all tissues examined. Up-regulated in diabetic heart.

It localises to the mitochondrion inner membrane. The protein resides in the secreted. The protein localises to the mitochondrion. It is found in the golgi apparatus membrane. Its subcellular location is the endoplasmic reticulum membrane. Component of the MICOS complex, a large protein complex of the mitochondrial inner membrane that plays crucial roles in the maintenance of crista junctions, inner membrane architecture, and formation of contact sites to the outer membrane. Plays a crucial role in crista junction formation and mitochondrial function. Can promote cardiac lipotoxicity by enhancing mitochondrial respiration and fatty acid metabolism in cardiac myoblasts. Promotes cholesterol efflux from macrophage cells. Detected in HDL, LDL and VLDL. Secreted by a microsomal triglyceride transfer protein (MTTP)-dependent mechanism, probably as a VLDL-associated protein that is subsequently transferred to HDL. This Homo sapiens (Human) protein is MICOS complex subunit MIC26 (APOO).